A 1055-amino-acid polypeptide reads, in one-letter code: Vacuolar protein sorting-associated protein 54 (1055 aa).

Residues 363–383 (TKKIIEVHQKYEQKKHLLAKL) are a coiled coil. The disordered stretch occupies residues 774–794 (IDDGPTKKPFKRTGSSATIDS).

The protein belongs to the VPS54 family. Component of the Golgi-associated retrograde protein (GARP) complex, also called VFT (VPS fifty-three) complex, composed of VPS51, VPS52, VPS53 and VPS54.

Its subcellular location is the golgi apparatus. The protein localises to the trans-Golgi network. Its function is as follows. Acts as a component of the GARP complex that is involved in retrograde transport from early and late endosomes to the trans-Golgi network (TGN). The GARP complex facilitates tethering as well as SNARE complex assembly at the Golgi. This Caenorhabditis briggsae protein is Vacuolar protein sorting-associated protein 54 (vps-54).